A 1423-amino-acid polypeptide reads, in one-letter code: Fructan beta-fructosidase (1423 aa).

An N-terminal signal peptide occupies residues 1 to 39 (MEEETVCKNWFMRKSGKSWIFGCAVFFVLGLATALPVAA). The segment at 44–161 (QTTAADTAVT…TNLEDMSHDT (118 aa)) is disordered. Positions 69–126 (AVTETTQSEGTASKQLTTPAVADQTTEPTDNEPISSSDGASSPYQVTDTTEPQQTLTP) are enriched in polar residues. Residues 455-458 (WAND), Gln474, 513-514 (FS), 581-582 (RD), and Asp783 each bind substrate. Residue Asp458 is part of the active site. Residues 867 to 871 (ASVEV) are involved in binding of sugars with beta-(2,6) linkages or binding of molecular weight fructans. The BIG2 domain maps to 924 to 1002 (PVAMNTTTAK…SKENPSLSKT (79 aa)). Residues 1368–1385 (DVNSVQQTEPSVMSSSPK) are compositionally biased toward polar residues. The interval 1368–1394 (DVNSVQQTEPSVMSSSPKATLPDTGDH) is disordered. The LPXTG sorting signal signature appears at 1388–1392 (LPDTG). Thr1391 carries the pentaglycyl murein peptidoglycan amidated threonine modification. Residues 1392–1423 (GDHKTDLSQLGVLAMIGSFLVEIAGYFKKRKD) constitute a propeptide, removed by sortase.

The protein belongs to the glycosyl hydrolase 32 family.

The protein localises to the secreted. It is found in the cell wall. The enzyme catalyses Hydrolysis of terminal, non-reducing (2-&gt;1)- and (2-&gt;6)-linked beta-D-fructofuranose residues in fructans.. Functionally, this protein is a fructanase enzyme which degrades levans and inulins to fructose and also cleaves sucrose into glucose and fructose and can therefore function as an extracellular invertase. In Streptococcus mutans serotype c (strain ATCC 700610 / UA159), this protein is Fructan beta-fructosidase (fruA).